We begin with the raw amino-acid sequence, 550 residues long: Dihydroxy-acid dehydratase (550 aa).

Residue Asp-78 coordinates Mg(2+). Cys-119 serves as a coordination point for [2Fe-2S] cluster. Mg(2+) is bound by residues Asp-120 and Lys-121. The residue at position 121 (Lys-121) is an N6-carboxylysine. Cys-191 is a [2Fe-2S] cluster binding site. Glu-440 contributes to the Mg(2+) binding site. Ser-466 functions as the Proton acceptor in the catalytic mechanism.

It belongs to the IlvD/Edd family. Homodimer. The cofactor is [2Fe-2S] cluster. Mg(2+) serves as cofactor.

The catalysed reaction is (2R)-2,3-dihydroxy-3-methylbutanoate = 3-methyl-2-oxobutanoate + H2O. It catalyses the reaction (2R,3R)-2,3-dihydroxy-3-methylpentanoate = (S)-3-methyl-2-oxopentanoate + H2O. The protein operates within amino-acid biosynthesis; L-isoleucine biosynthesis; L-isoleucine from 2-oxobutanoate: step 3/4. It functions in the pathway amino-acid biosynthesis; L-valine biosynthesis; L-valine from pyruvate: step 3/4. Its function is as follows. Functions in the biosynthesis of branched-chain amino acids. Catalyzes the dehydration of (2R,3R)-2,3-dihydroxy-3-methylpentanoate (2,3-dihydroxy-3-methylvalerate) into 2-oxo-3-methylpentanoate (2-oxo-3-methylvalerate) and of (2R)-2,3-dihydroxy-3-methylbutanoate (2,3-dihydroxyisovalerate) into 2-oxo-3-methylbutanoate (2-oxoisovalerate), the penultimate precursor to L-isoleucine and L-valine, respectively. This Methanococcus maripaludis (strain C7 / ATCC BAA-1331) protein is Dihydroxy-acid dehydratase.